We begin with the raw amino-acid sequence, 634 residues long: 1,4-alpha-glucan branching enzyme GlgB (634 aa).

The Nucleophile role is filled by Asp305. The active-site Proton donor is Glu357.

This sequence belongs to the glycosyl hydrolase 13 family. GlgB subfamily. In terms of assembly, monomer.

It catalyses the reaction Transfers a segment of a (1-&gt;4)-alpha-D-glucan chain to a primary hydroxy group in a similar glucan chain.. The protein operates within glycan biosynthesis; glycogen biosynthesis. In terms of biological role, catalyzes the formation of the alpha-1,6-glucosidic linkages in glycogen by scission of a 1,4-alpha-linked oligosaccharide from growing alpha-1,4-glucan chains and the subsequent attachment of the oligosaccharide to the alpha-1,6 position. The polypeptide is 1,4-alpha-glucan branching enzyme GlgB (Lactiplantibacillus plantarum (strain ATCC BAA-793 / NCIMB 8826 / WCFS1) (Lactobacillus plantarum)).